Reading from the N-terminus, the 371-residue chain is Queuine tRNA-ribosyltransferase (371 aa).

The active-site Proton acceptor is Asp-90. Residues 90–94 (DSGGF), Asp-144, Gln-188, and Gly-215 each bind substrate. An RNA binding region spans residues 246–252 (GVGTPED). Residue Asp-265 is the Nucleophile of the active site. An RNA binding; important for wobble base 34 recognition region spans residues 270 to 274 (TRNAR). Positions 303, 305, 308, and 334 each coordinate Zn(2+).

The protein belongs to the queuine tRNA-ribosyltransferase family. Homodimer. Within each dimer, one monomer is responsible for RNA recognition and catalysis, while the other monomer binds to the replacement base PreQ1. Zn(2+) is required as a cofactor.

The catalysed reaction is 7-aminomethyl-7-carbaguanine + guanosine(34) in tRNA = 7-aminomethyl-7-carbaguanosine(34) in tRNA + guanine. It participates in tRNA modification; tRNA-queuosine biosynthesis. In terms of biological role, catalyzes the base-exchange of a guanine (G) residue with the queuine precursor 7-aminomethyl-7-deazaguanine (PreQ1) at position 34 (anticodon wobble position) in tRNAs with GU(N) anticodons (tRNA-Asp, -Asn, -His and -Tyr). Catalysis occurs through a double-displacement mechanism. The nucleophile active site attacks the C1' of nucleotide 34 to detach the guanine base from the RNA, forming a covalent enzyme-RNA intermediate. The proton acceptor active site deprotonates the incoming PreQ1, allowing a nucleophilic attack on the C1' of the ribose to form the product. After dissociation, two additional enzymatic reactions on the tRNA convert PreQ1 to queuine (Q), resulting in the hypermodified nucleoside queuosine (7-(((4,5-cis-dihydroxy-2-cyclopenten-1-yl)amino)methyl)-7-deazaguanosine). The polypeptide is Queuine tRNA-ribosyltransferase (Chromobacterium violaceum (strain ATCC 12472 / DSM 30191 / JCM 1249 / CCUG 213 / NBRC 12614 / NCIMB 9131 / NCTC 9757 / MK)).